A 457-amino-acid polypeptide reads, in one-letter code: RuvB-like helicase 1 (457 aa).

ATP is bound at residue 73 to 80 (GGPSTGKT).

This sequence belongs to the RuvB family. May form heterododecamers with RVB2. Component of the SWR1 chromatin remodeling complex, the INO80 chromatin remodeling complex, and of the R2TP complex.

Its subcellular location is the nucleus. It carries out the reaction ATP + H2O = ADP + phosphate + H(+). In terms of biological role, DNA helicase which participates in several chromatin remodeling complexes, including the SWR1 and the INO80 complexes. The SWR1 complex mediates the ATP-dependent exchange of histone H2A for the H2A variant HZT1 leading to transcriptional regulation of selected genes by chromatin remodeling. The INO80 complex remodels chromatin by shifting nucleosomes and is involved in DNA repair. Also involved in pre-rRNA processing. This is RuvB-like helicase 1 (RVB1) from Candida glabrata (strain ATCC 2001 / BCRC 20586 / JCM 3761 / NBRC 0622 / NRRL Y-65 / CBS 138) (Yeast).